Here is a 157-residue protein sequence, read N- to C-terminus: Protein Smg homolog (157 aa).

This sequence belongs to the Smg family.

The polypeptide is Protein Smg homolog (Xanthomonas euvesicatoria pv. vesicatoria (strain 85-10) (Xanthomonas campestris pv. vesicatoria)).